The sequence spans 663 residues: Polyunsaturated fatty acid lipoxygenase ALOX12 (663 aa).

The PLAT domain occupies Gly-2 to Arg-114. One can recognise a Lipoxygenase domain in the interval Leu-115–Ile-663. Residue Ser-246 is modified to Phosphoserine. The Fe cation site is built by His-360, His-365, His-540, Asn-544, and Ile-663.

Belongs to the lipoxygenase family. Fe cation is required as a cofactor. In terms of tissue distribution, found primarily in platelets and in microsomal and cytosolic fractions of the epidermis (at protein level).

The protein localises to the cytoplasm. Its subcellular location is the cytosol. It is found in the membrane. The enzyme catalyses (5Z,8Z,11Z,14Z)-eicosatetraenoate + O2 = (12S)-hydroperoxy-(5Z,8Z,10E,14Z)-eicosatetraenoate. The catalysed reaction is (9Z,12Z)-octadecadienoate + O2 = (13S)-hydroperoxy-(9Z,11E)-octadecadienoate. It catalyses the reaction 2 leukotriene A4 + O2 + 2 H2O = 2 lipoxin A4. It carries out the reaction 2 leukotriene A4 + O2 + 2 H2O = 2 lipoxin B4. The enzyme catalyses (5Z,8Z,11Z)-eicosatrienoate + O2 = (12S)-hydroperoxy-(5Z,8Z,10E)-eicosatrienoate. The catalysed reaction is (8Z,11Z,14Z)-eicosatrienoate + O2 = (12S)-hydroperoxy-(8Z,10E,14Z)-eicosatrienoate. It catalyses the reaction (4Z,7Z,10Z,13Z,16Z,19Z)-docosahexaenoate + O2 = (14S)-hydroperoxy-(4Z,7Z,10Z,12E,16Z,19Z)-docosahexaenoate. It carries out the reaction (7S)-hydroperoxy-(4Z,8E,10Z,13Z,16Z,19Z)-docosahexaenoate + O2 = (7S,14S)-dihydroperoxy-(4Z,8E,10Z,12E,16Z,19Z)-docosahexaenoate. The enzyme catalyses (7S)-hydroperoxy-(4Z,8E,10Z,13Z,16Z,19Z)-docosahexaenoate + O2 = (7S,17S)-dihydroperoxy-(4Z,8E,10Z,13Z,15E,19Z)-docosahexaenoate. The catalysed reaction is (14R,15S)-epoxy-(5Z,8Z,11Z)-eicosatrienoate + O2 = (12S)-hydroperoxy-(14R,15S)-epoxy-(5Z,8Z,10E)-eicosatrienoate. It catalyses the reaction (14S,15R)-epoxy-(5Z,8Z,11Z)-eicosatrienoate + O2 = (12S)-hydroperoxy-(14S,15R)-epoxy-(5Z,8Z,10E)-eicosatrienoate. It carries out the reaction (5Z,8Z,11Z,14Z)-eicosatetraenoate + O2 = (15S)-hydroperoxy-(5Z,8Z,11Z,13E)-eicosatetraenoate. The enzyme catalyses (14S)-hydroperoxy-(4Z,7Z,10Z,12E,16Z,19Z)-docosahexaenoate = (13S,14S)-epoxy-(4Z,7Z,9E,11E,16Z,19Z)-docosahexaenoate + H2O. The catalysed reaction is N-(5Z,8Z,11Z,14Z)-eicosatetraenoyl-L-alanine + O2 = N-(15S)-hydroperoxy-(5Z,8Z,11Z,13E)-eicosatetraenoyl-alanine. It catalyses the reaction N-(5Z,8Z,11Z,14Z)-eicosatetraenoyl-L-alanine + O2 = N-(12S)-hydroperoxy-(5Z,8Z,10E,14Z)-eicosatetraenoyl-alanine. It carries out the reaction N-(5Z,8Z,11Z,14Z)-eicosatetraenoyl-gamma-aminobutanoate + O2 = N-(15S)-hydroperoxy-(5Z,8Z,11Z,13E)-eicosatetraenoyl-gamma-aminobutanoate. The enzyme catalyses N-(5Z,8Z,11Z,14Z)-eicosatetraenoyl-gamma-aminobutanoate + O2 = N-(12S)-hydroperoxy-(5Z,8Z,10E,14Z)-eicosatetraenoyl-gamma-aminobutanoate. The catalysed reaction is N-(5Z,8Z,11Z,14Z)-eicosatetraenoyl-glycine + O2 = N-(15S)-hydroperoxy-(5Z,8Z,11Z,13E)-eicosatetraenoyl-glycine. It catalyses the reaction N-(5Z,8Z,11Z,14Z)-eicosatetraenoyl-glycine + O2 = N-(12S)-hydroperoxy-(5Z,8Z,10E,14Z)-eicosatetraenoyl-glycine. It carries out the reaction N-(5Z,8Z,11Z,14Z)-eicosatetraenoyl-taurine + O2 = N-(12S)-hydroperoxy-(5Z,8Z,10E,14Z)-eicosatetraenoyl-taurine. The enzyme catalyses N-(5Z,8Z,11Z,14Z)-eicosatetraenoyl-taurine + O2 = N-(15S)-hydroperoxy-(5Z,8Z,11Z,13E)-eicosatetraenoyl-taurine. The catalysed reaction is (5Z,8Z,11Z,14Z,17Z)-eicosapentaenoate + O2 = (12S)-hydroperoxy-(5Z,8Z,10E,14Z,17Z)-eicosapentaenoate. The protein operates within lipid metabolism; hydroperoxy eicosatetraenoic acid biosynthesis. Activated by EGF. Arachidonic acid conversion is inhibited by (13S,14S)-epoxy-(4Z,7Z,9E,11E,16Z,19Z)-docosahexaenoate (13S,14S-epoxy-DHA). Arachidonate 12-lipoxygenase activity is decreased when PH decreases from 7.4 to 6. Its function is as follows. Catalyzes the regio and stereo-specific incorporation of molecular oxygen into free and esterified polyunsaturated fatty acids generating lipid hydroperoxides that can be further reduced to the corresponding hydroxy species. Mainly converts arachidonate ((5Z,8Z,11Z,14Z)-eicosatetraenoate) to the specific bioactive lipid (12S)-hydroperoxyeicosatetraenoate/(12S)-HPETE. Through the production of bioactive lipids like (12S)-HPETE it regulates different biological processes including platelet activation. It can also catalyze the epoxidation of double bonds of polyunsaturated fatty acids such as (14S)-hydroperoxy-docosahexaenoate/(14S)-HPDHA resulting in the formation of (13S,14S)-epoxy-DHA. Furthermore, it may participate in the sequential oxidations of DHA ((4Z,7Z,10Z,13Z,16Z,19Z)-docosahexaenoate) to generate specialized pro-resolving mediators (SPMs) like resolvin D5 ((7S,17S)-diHPDHA) and (7S,14S)-diHPDHA, that actively down-regulate the immune response and have anti-aggregation properties with platelets. An additional function involves a multistep process by which it transforms leukotriene A4/LTA4 into the bioactive lipids lipoxin A4/LXA4 and lipoxin B4/LXB4, both are vasoactive and LXA4 may regulate neutrophil function via occupancy of specific recognition sites. Can also peroxidize linoleate ((9Z,12Z)-octadecadienoate) to (13S)-hydroperoxyoctadecadienoate/ (13S-HPODE). Due to its role in regulating both the expression of the vascular endothelial growth factor (VEGF, an angiogenic factor involved in the survival and metastasis of solid tumors) and the expression of integrin beta-1 (known to affect tumor cell migration and proliferation), it can be regarded as protumorigenic. Important for cell survival, as it may play a role not only in proliferation but also in the prevention of apoptosis in vascular smooth muscle cells. The protein is Polyunsaturated fatty acid lipoxygenase ALOX12 (Alox12) of Mus musculus (Mouse).